The chain runs to 307 residues: tRNA pseudouridine synthase B (307 aa).

Residue D38 is the Nucleophile of the active site.

The protein belongs to the pseudouridine synthase TruB family. Type 1 subfamily.

It catalyses the reaction uridine(55) in tRNA = pseudouridine(55) in tRNA. In terms of biological role, responsible for synthesis of pseudouridine from uracil-55 in the psi GC loop of transfer RNAs. The chain is tRNA pseudouridine synthase B from Bacillus anthracis.